Consider the following 116-residue polypeptide: Large ribosomal subunit protein uL18 (116 aa).

The protein belongs to the universal ribosomal protein uL18 family. In terms of assembly, part of the 50S ribosomal subunit; part of the 5S rRNA/L5/L18/L25 subcomplex. Contacts the 5S and 23S rRNAs.

Its function is as follows. This is one of the proteins that bind and probably mediate the attachment of the 5S RNA into the large ribosomal subunit, where it forms part of the central protuberance. The chain is Large ribosomal subunit protein uL18 from Mycoplasma capricolum subsp. capricolum (strain California kid / ATCC 27343 / NCTC 10154).